Here is a 313-residue protein sequence, read N- to C-terminus: Porphobilinogen deaminase (313 aa).

Cys-242 is subject to S-(dipyrrolylmethanemethyl)cysteine.

The protein belongs to the HMBS family. As to quaternary structure, monomer. The cofactor is dipyrromethane.

It carries out the reaction 4 porphobilinogen + H2O = hydroxymethylbilane + 4 NH4(+). The protein operates within porphyrin-containing compound metabolism; protoporphyrin-IX biosynthesis; coproporphyrinogen-III from 5-aminolevulinate: step 2/4. Functionally, tetrapolymerization of the monopyrrole PBG into the hydroxymethylbilane pre-uroporphyrinogen in several discrete steps. This Yersinia pseudotuberculosis serotype IB (strain PB1/+) protein is Porphobilinogen deaminase.